The following is a 336-amino-acid chain: Quinolinate synthase (336 aa).

Positions 25 and 42 each coordinate iminosuccinate. Residue C86 coordinates [4Fe-4S] cluster. Iminosuccinate is bound by residues 117-119 (YIN) and S138. C198 is a binding site for [4Fe-4S] cluster. Iminosuccinate is bound by residues 224–226 (HPE) and T241. Residue C288 participates in [4Fe-4S] cluster binding.

This sequence belongs to the quinolinate synthase family. Type 3 subfamily. It depends on [4Fe-4S] cluster as a cofactor.

The protein resides in the cytoplasm. The catalysed reaction is iminosuccinate + dihydroxyacetone phosphate = quinolinate + phosphate + 2 H2O + H(+). It participates in cofactor biosynthesis; NAD(+) biosynthesis; quinolinate from iminoaspartate: step 1/1. Its function is as follows. Catalyzes the condensation of iminoaspartate with dihydroxyacetone phosphate to form quinolinate. The protein is Quinolinate synthase of Helicobacter pylori (strain ATCC 700392 / 26695) (Campylobacter pylori).